A 471-amino-acid polypeptide reads, in one-letter code: Monocarboxylate transporter 11 (471 aa).

Basic residues predominate over residues Met1–Phe13. The interval Met1 to Gly31 is disordered. Topologically, residues Met1–Gly35 are cytoplasmic. The span at Pro19–Gln28 shows a compositional bias: low complexity. 12 consecutive transmembrane segments (helical) span residues Gly36–Leu56, Ala78–Leu98, Pro106–Ser126, Leu131–Leu151, Val163–Ala183, Leu198–Val218, Ala243–Val263, Gly273–Ala293, Leu312–Val332, Gly333–Ala353, Leu367–Leu389, and Ala407–Pro427. Residues Arg428–Cys471 are Cytoplasmic-facing.

This sequence belongs to the major facilitator superfamily. Monocarboxylate porter (TC 2.A.1.13) family. As to quaternary structure, interacts with isoform 2 of BSG. In terms of tissue distribution, expressed in liver, salivary gland and thyroid.

It is found in the endoplasmic reticulum membrane. It localises to the cell membrane. It carries out the reaction pyruvate(out) + H(+)(out) = pyruvate(in) + H(+)(in). Proton-linked monocarboxylate transporter. It catalyzes the transport of pyruvate across the plasma membrane. Probably involved in hepatic lipid metabolism: overexpression results in an increase of triacylglycerol(TAG) levels, small increases in intracellular diacylglycerols and decreases in lysophosphatidylcholine, cholesterol ester and sphingomyelin lipids. The sequence is that of Monocarboxylate transporter 11 (SLC16A11) from Homo sapiens (Human).